We begin with the raw amino-acid sequence, 147 residues long: PTPN13-like protein, Y-linked (147 aa).

In terms of tissue distribution, expressed in testis. Detected in spermatocytes, spermatids and spermatozoa (at protein level).

The polypeptide is PTPN13-like protein, Y-linked (PRY) (Homo sapiens (Human)).